Here is a 392-residue protein sequence, read N- to C-terminus: GTPase Obg (392 aa).

One can recognise an Obg domain in the interval 1–159 (MKFVDEAEIR…RNLKLELMLL (159 aa)). Residues 121-146 (GFHGLGNTRFKSSTNRAPRQKTNGTP) are disordered. Over residues 129–145 (RFKSSTNRAPRQKTNGT) the composition is skewed to polar residues. The OBG-type G domain occupies 160–333 (ADVGLLGMPN…LCNDVMDFIE (174 aa)). GTP contacts are provided by residues 166-173 (GMPNAGKS), 191-195 (FTTLV), 213-216 (DIPG), 283-286 (NKVD), and 314-316 (SAF). Serine 173 and threonine 193 together coordinate Mg(2+).

The protein belongs to the TRAFAC class OBG-HflX-like GTPase superfamily. OBG GTPase family. As to quaternary structure, monomer. Requires Mg(2+) as cofactor.

The protein localises to the cytoplasm. Its function is as follows. An essential GTPase which binds GTP, GDP and possibly (p)ppGpp with moderate affinity, with high nucleotide exchange rates and a fairly low GTP hydrolysis rate. Plays a role in control of the cell cycle, stress response, ribosome biogenesis and in those bacteria that undergo differentiation, in morphogenesis control. This Alteromonas mediterranea (strain DSM 17117 / CIP 110805 / LMG 28347 / Deep ecotype) protein is GTPase Obg.